Consider the following 188-residue polypeptide: Probable manganese efflux pump MntP (188 aa).

6 helical membrane-spanning segments follow: residues 3-23 (FTAT…ASIG), 41-61 (LIFG…GILA), 66-86 (LEWN…RMII), 106-128 (WLLV…GLAF), 143-163 (ATLI…PMLG), and 168-188 (ILGG…HFHG).

The protein belongs to the MntP (TC 9.B.29) family.

The protein localises to the cell inner membrane. Its function is as follows. Probably functions as a manganese efflux pump. This is Probable manganese efflux pump MntP from Salmonella typhimurium (strain LT2 / SGSC1412 / ATCC 700720).